The following is a 184-amino-acid chain: Large ribosomal subunit protein uL5 (184 aa).

It belongs to the universal ribosomal protein uL5 family. As to quaternary structure, component of the large ribosomal subunit. Interacts with Fmr1 to form the RNA-induced silencing complex (RISC), a ribonucleoprotein (RNP) complex involved in translation regulation, other components of the complex are RpL5, Rm62, AGO2 and Dcr-1.

It is found in the nucleus. Its subcellular location is the cytoplasm. Its function is as follows. Component of the ribosome, a large ribonucleoprotein complex responsible for the synthesis of proteins in the cell. The small ribosomal subunit (SSU) binds messenger RNAs (mRNAs) and translates the encoded message by selecting cognate aminoacyl-transfer RNA (tRNA) molecules. The large subunit (LSU) contains the ribosomal catalytic site termed the peptidyl transferase center (PTC), which catalyzes the formation of peptide bonds, thereby polymerizing the amino acids delivered by tRNAs into a polypeptide chain. The nascent polypeptides leave the ribosome through a tunnel in the LSU and interact with protein factors that function in enzymatic processing, targeting, and the membrane insertion of nascent chains at the exit of the ribosomal tunnel. The sequence is that of Large ribosomal subunit protein uL5 (RpL11) from Drosophila melanogaster (Fruit fly).